Here is a 529-residue protein sequence, read N- to C-terminus: Alkaline phosphatase, germ cell type (529 aa).

Residues Met1–Ser18 form the signal peptide. Asp60 is a Mg(2+) binding site. Residues Asp60 and Ser110 each contribute to the Zn(2+) site. Residue Ser110 is the Phosphoserine intermediate of the active site. A disulfide bond links Cys139 and Cys201. An N-linked (GlcNAc...) asparagine glycan is attached at Asn140. Position 173 (Ser173) interacts with Mg(2+). Glu234 is a binding site for Ca(2+). N-linked (GlcNAc...) asparagine glycosylation is found at Asn267 and Asn277. Positions 287, 288, and 303 each coordinate Ca(2+). Glu329 provides a ligand contact to Mg(2+). Zn(2+)-binding residues include Asp334, His338, Asp375, His376, and His450. The cysteines at positions 485 and 492 are disulfide-linked. Ser502 is lipidated: GPI-anchor amidated serine. The propeptide at Ala503–Pro529 is removed in mature form.

It belongs to the alkaline phosphatase family. Homodimer. It depends on Mg(2+) as a cofactor. Zn(2+) serves as cofactor. Ca(2+) is required as a cofactor. Embryo and testis.

Its subcellular location is the cell membrane. It carries out the reaction a phosphate monoester + H2O = an alcohol + phosphate. With respect to regulation, inhibited by L-leucine, EDTA and heat. Its function is as follows. Alkaline phosphatase that can hydrolyze various phosphate compounds. The protein is Alkaline phosphatase, germ cell type (Alpg) of Mus musculus (Mouse).